The sequence spans 53 residues: Metallocarboxypeptidase inhibitor (53 aa).

3 cysteine pairs are disulfide-bonded: Cys9–Cys23, Cys15–Cys51, and Cys27–Cys38. Ala53 lines the Zn(2+) pocket.

As to quaternary structure, monomer. Interacts (via C-terminus) with human CPA4.

Its function is as follows. Metallocarboxypeptidase inhibitor. Has an inhibitory effect on bovine CPA1 and CPB2, human CPA1, CPA2, CPA4, CPB1 and CPB2, and porcine CPB1. Does not inhibit D.melanogaster svr (carboxypeptidase D). Shows no activity against serine proteases subtilisin or bovine trypsin, cysteine protease papain, and aspartyl protease porcine pepsin. The chain is Metallocarboxypeptidase inhibitor from Nerita versicolor (Four-tooth nerite).